Here is a 150-residue protein sequence, read N- to C-terminus: MRFKGEFFNAIDAKGRASIPAKFRETLSSVYGDERLIVTQSDGGLAAYPYQEWHKMLERVEALPSNDLKEAINLAIISPAVECSFDKQGRIQLPKAQRCYAGLESEIREIVVVGAIDKIMIWNRTKHIERREQAEAFLRAQSQELKNLGF.

2 SpoVT-AbrB domains span residues 6–52 and 80–126; these read EFFN…PYQE and AVEC…NRTK.

Belongs to the MraZ family. Forms oligomers.

The protein localises to the cytoplasm. Its subcellular location is the nucleoid. The protein is Transcriptional regulator MraZ of Syntrophotalea carbinolica (strain DSM 2380 / NBRC 103641 / GraBd1) (Pelobacter carbinolicus).